The primary structure comprises 219 residues: Cytidylate kinase (219 aa).

21–29 (GPAASGKGT) contributes to the ATP binding site.

Belongs to the cytidylate kinase family. Type 1 subfamily.

The protein resides in the cytoplasm. It carries out the reaction CMP + ATP = CDP + ADP. The enzyme catalyses dCMP + ATP = dCDP + ADP. In Rickettsia akari (strain Hartford), this protein is Cytidylate kinase.